The primary structure comprises 280 residues: uncharacterized protein (280 aa).

Residues 1–35 (MQGQVLKKVLKKYVHIGMCTLFLHAILLFPCVAQA) form the signal peptide.

This is an uncharacterized protein from Treponema pallidum (strain Nichols).